Consider the following 374-residue polypeptide: Speckle-type POZ protein B (374 aa).

The 131-residue stretch at 31 to 161 folds into the MATH domain; that stretch reads KFSYMWTINN…DDKLTLFCEV (131 aa). A required for nuclear localization region spans residues 71 to 191; that stretch reads VNPKGLDEES…PECRLSDELG (121 aa). Residues 173-297 enclose the BTB domain; it reads QNTMNMVKVP…MCEEALCSNL (125 aa). The interval 297-355 is homodimerization; that stretch reads LSVENAAEILILADLHSADQLKTQAVDFINYHASDVMETSGWKSMVVSHPHLVAEAYRS.

The protein belongs to the Tdpoz family. In terms of assembly, homodimer. Part of cullin-RING-based BCR (BTB-CUL3-RBX1) E3 ubiquitin-protein ligase complexes that contain CUL3 and SPOP, plus a target protein.

The protein resides in the nucleus. It is found in the nucleus speckle. Its pathway is protein modification; protein ubiquitination. In terms of biological role, component of a cullin-RING-based BCR (BTB-CUL3-RBX1) E3 ubiquitin-protein ligase complex that mediates the ubiquitination of target proteins, leading most often to their proteasomal degradation. This Xenopus laevis (African clawed frog) protein is Speckle-type POZ protein B (spop-b).